The chain runs to 861 residues: Valine--tRNA ligase (861 aa).

The 'HIGH' region motif lies at 42–52 (PNITGRIHMGH). The 'KMSKS' region signature appears at 521–525 (KMSKS). Lys-524 lines the ATP pocket. The stretch at 792–861 (VAGLNLQSEI…ILNQILGDLM (70 aa)) forms a coiled coil.

Belongs to the class-I aminoacyl-tRNA synthetase family. ValS type 1 subfamily. As to quaternary structure, monomer.

Its subcellular location is the cytoplasm. It catalyses the reaction tRNA(Val) + L-valine + ATP = L-valyl-tRNA(Val) + AMP + diphosphate. Functionally, catalyzes the attachment of valine to tRNA(Val). As ValRS can inadvertently accommodate and process structurally similar amino acids such as threonine, to avoid such errors, it has a 'posttransfer' editing activity that hydrolyzes mischarged Thr-tRNA(Val) in a tRNA-dependent manner. In Pseudothermotoga lettingae (strain ATCC BAA-301 / DSM 14385 / NBRC 107922 / TMO) (Thermotoga lettingae), this protein is Valine--tRNA ligase.